The primary structure comprises 249 residues: Tumor necrosis factor ligand superfamily member 12 (249 aa).

The Cytoplasmic segment spans residues 1-21 (MAARRSQRRRGRRGEPGTALL). Residues 22 to 45 (APLVLSLGLALACLGLLLVVVSLG) traverse the membrane as a helical; Signal-anchor for type II membrane protein segment. Residues 46–249 (SWATLSAQEP…LTYFGLFQVH (204 aa)) are Extracellular-facing. Residues 52–78 (AQEPSQEELTAEDRREPPELNPQTEES) are disordered. A THD domain is found at 107–248 (IAAHYEVHPR…FLTYFGLFQV (142 aa)). N139 carries an N-linked (GlcNAc...) asparagine glycan. A disulfide bridge connects residues C191 and C210.

It belongs to the tumor necrosis factor family. Homotrimer. Interacts with the angiogenic factor AGGF1/VG5Q. The soluble form is produced from the membrane form by proteolytic processing. In terms of tissue distribution, widely expressed.

It is found in the cell membrane. The protein localises to the secreted. Functionally, binds to FN14 and possibly also to TNRFSF12/APO3. Weak inducer of apoptosis in some cell types. Mediates NF-kappa-B activation. Promotes angiogenesis and the proliferation of endothelial cells. Also involved in induction of inflammatory cytokines. Promotes IL8 secretion. The protein is Tumor necrosis factor ligand superfamily member 12 (Tnfsf12) of Mus musculus (Mouse).